The chain runs to 297 residues: Phosphatidylinositol N-acetylglucosaminyltransferase subunit C (297 aa).

4 consecutive transmembrane segments (helical) span residues 67 to 87 (VFVV…WLFG), 88 to 108 (TGLA…GGDG), 153 to 173 (AVFM…AAIV), and 239 to 259 (AFGG…LLLF).

It belongs to the PIGC family. Component of the glycosylphosphatidylinositol-N-acetylglucosaminyltransferase (GPI-GnT) complex composed at least by PIGA, PIGC, PIGH, PIGP, PIGQ, PIGY and DPM2. Interacts with PIGQ. Interacts with the heterodimer PIGA:PIGH.

It is found in the endoplasmic reticulum membrane. The protein operates within glycolipid biosynthesis; glycosylphosphatidylinositol-anchor biosynthesis. In terms of biological role, part of the glycosylphosphatidylinositol-N-acetylglucosaminyltransferase (GPI-GnT) complex that catalyzes the transfer of N-acetylglucosamine from UDP-N-acetylglucosamine to phosphatidylinositol and participates in the first step of GPI biosynthesis. In Mus musculus (Mouse), this protein is Phosphatidylinositol N-acetylglucosaminyltransferase subunit C.